We begin with the raw amino-acid sequence, 432 residues long: Adenosylhomocysteinase (432 aa).

The disordered stretch occupies residues 1 to 24; that stretch reads MSAYSPLSAQLDADTDVDVESTRT. The substrate site is built by Asp-137 and Glu-162. An NAD(+)-binding site is contributed by 163 to 165; sequence TTT. Substrate contacts are provided by Lys-192 and Asp-196. NAD(+) is bound by residues Asn-197, 226-231, Glu-249, Asn-284, 305-307, and Asn-352; these read GYGYCG and AGH.

Belongs to the adenosylhomocysteinase family. NAD(+) is required as a cofactor.

The protein localises to the cytoplasm. It carries out the reaction S-adenosyl-L-homocysteine + H2O = L-homocysteine + adenosine. It functions in the pathway amino-acid biosynthesis; L-homocysteine biosynthesis; L-homocysteine from S-adenosyl-L-homocysteine: step 1/1. Functionally, may play a key role in the regulation of the intracellular concentration of adenosylhomocysteine. The protein is Adenosylhomocysteinase of Haloquadratum walsbyi (strain DSM 16854 / JCM 12705 / C23).